The sequence spans 446 residues: Transcription factor Dp-2 (446 aa).

Thr2 bears the N-acetylthreonine mark. Ser24 bears the Phosphoserine mark. The tract at residues 60–82 (PQMIISTPQRLTSSGSVLIGSPY) is interaction with CEBPA. Positions 103–118 (GDRKRARKFIDSDFSE) match the Nuclear localization signal motif. At Ser122 the chain carries Phosphoserine. Residues 129 to 210 (GKGLRHFSMK…KKEIKWIGLP (82 aa)) mediate DNA binding. The short motif at 176-210 (DQKNIRRRVYDALNVLMAMNIISKEKKEIKWIGLP) is the DEF box element. The segment at 219–292 (NLEIEKQRRI…RKTVIDCSIS (74 aa)) is dimerization. A DCB1 region spans residues 229 to 261 (ERIKQKRAQLQELLLQQIAFKNLVQRNRQNEQQ). The interval 274–330 (LPFIIINTSRKTVIDCSISSDKFEYLFNFDNTFEIHDDIEVLKRMGMSFGLESGKCS) is DCB2. A compositionally biased stretch (low complexity) spans 409–419 (SHQSSSAASHC). Residues 409–446 (SHQSSSAASHCSESRGETPCSFNDEDEEDDEEDSSSPE) are disordered. Residues 431–446 (NDEDEEDDEEDSSSPE) are compositionally biased toward acidic residues.

It belongs to the E2F/DP family. Component of the DRTF1/E2F transcription factor complex. Forms heterodimers with E2F family members. The complex can interact with hypophosphorylated retinoblastoma protein RB1 and related proteins (RBL1 and RBL2) that inhibit the E2F transactivation domain. During the cell cycle, RB becomes phosphorylated in mid-to-late G1 phase, detaches from the DRTF1/E2F complex rendering E2F transcriptionally active. Viral oncoproteins, notably E1A, T-antigen and HPV E7, are capable of sequestering RB protein, thus releasing the active complex. Interacts with GMCL. Component of the DREAM complex (also named LINC complex) at least composed of E2F4, E2F5, LIN9, LIN37, LIN52, LIN54, MYBL1, MYBL2, RBL1, RBL2, RBBP4, TFDP1 and TFDP2. The complex exists in quiescent cells where it represses cell cycle-dependent genes. It dissociates in S phase when LIN9, LIN37, LIN52 and LIN54 form a subcomplex that binds to MYBL2. The complex TFDP2:E2F1 interacts with CEBPA; the interaction prevents CEBPA binding to target genes promoters and represses its transcriptional activity. In terms of processing, ser-24 is probably phosphorylated by CDK2. High levels in heart and skeletal muscle. Also found in placenta, kidney, brain, lung and liver. The presence as well as the abundance of the different transcripts appear to vary significantly in different tissues and cell lines.

It localises to the nucleus. Can stimulate E2F-dependent transcription. Binds DNA cooperatively with E2F family members through the E2 recognition site, 5'-TTTC[CG]CGC-3', found in the promoter region of a number of genes whose products are involved in cell cycle regulation or in DNA replication. The TFDP2:E2F complex functions in the control of cell-cycle progression from G1 to S phase. The E2F1:DP complex appears to mediate both cell proliferation and apoptosis. Blocks adipocyte differentiation by repressing CEBPA binding to its target gene promoters. The protein is Transcription factor Dp-2 (TFDP2) of Homo sapiens (Human).